The chain runs to 1049 residues: MKMADAKQKRNEQLKRWIGSETDLEPPLLKKKKTKVKFDDGAVFLAACSSGDTEEVLRMLDRGADINYANVDGLTALHQACIDDNVDMVTFLVEHGACINQPDNEGWIPLHAAASCGYLDIAEYLISQGASVGVVNSEGETPLDIAEEEAMEELLQNEINRQGVDIEAARKEEERIMLRDARQWLNSGQINDVRHTKSGGTALHVAAAKGYAEVLKLLIQAGYDVNIKDYDGWTPLHAAAHWGKEEACRILVEHLCDMDVVNKVGQTAFDVADEDILGYLEELQKKQNLLLSEKKDVKKSPLIETTTTGDNNQSVKPLKSKETLLLEPEKTAPRIETLEPEKVDEEEGEGKKDESSCSSEEEEEEDSESENEADKTKSSVPSSVSNSTPTTAPSSITVTSPTTPSNQVTTPTSPTKKVSTPAGKLSPKEEDRKDESPASWRLGLRKTGSYGALAEISTTKEAQKEKDTAGVMRSASSPRLSSSLDNKDKEKEKEKTRLAYVAPTIPRRHVSTSDIDEKENRDSAASLVRSGSYTRRRWEEDLKNSDGTASTNRTSSYQRSTSHTLALGRTSSSRDLPAKSSSASSLEPNNSKAWQPSSYYQSYSIHRSGSFGRRHEDPLSSTSSSTTTTTTTSSVTSPTGHRSLLSRYWAEESAEKEKEKEKESATVIPTINTAGTTTTTSTTGTVLGSDGRERRRSYLTPVRDEESESQRKARSRQARQSRRSTQGVTLTDLQEAEKTIGRSRPTRPREDEKEEKEKQDKEKQEEKKETETKEDDYRSRYRSFEEKYRTSLASSTTASSTIPSSSSSSSSSLYSTSSLNRPNSLTGLTSTYSRSTRDTDRESDRKEKDEDRDGDDKSQPRSIRDRRRPREKRRSTGVSFWTQDSDENEPDHPSDSEGSTKGEPQSDRLSSNDPLSTSTSSTDRYESLSSRGIGESRRPYSRFEKDDSTDYKKLYEQILAENEKLKAQLRDTELELSDLKLQLEKATQRQERFADRSQLEMEKRERRALERKISEMEEELKMLPDLKADNQRLKDENGALIRVISKLSK.

ANK repeat units lie at residues 39-68 (DDGAVFLAACSSGDTEEVLRMLDRGADINY), 72-101 (DGLTALHQACIDDNVDMVTFLVEHGACINQ), 105-134 (EGWIPLHAAASCGYLDIAEYLISQGASVGV), 138-164 (EGETPLDIAEEEAMEELLQNEINRQGV), 198-227 (SGGTALHVAAAKGYAEVLKLLIQAGYDVNI), and 231-260 (DGWTPLHAAAHWGKEEACRILVEHLCDMDV). Positions 302–947 (LIETTTTGDN…RPYSRFEKDD (646 aa)) are disordered. Residues 303–315 (IETTTTGDNNQSV) are compositionally biased toward polar residues. Over residues 319–341 (KSKETLLLEPEKTAPRIETLEPE) the composition is skewed to basic and acidic residues. A compositionally biased stretch (acidic residues) spans 359 to 371 (SEEEEEEDSESEN). Positions 378–421 (SSVPSSVSNSTPTTAPSSITVTSPTTPSNQVTTPTSPTKKVSTP) are enriched in low complexity. Over residues 426–436 (SPKEEDRKDES) the composition is skewed to basic and acidic residues. The segment covering 473 to 484 (RSASSPRLSSSL) has biased composition (low complexity). The segment covering 485–497 (DNKDKEKEKEKTR) has biased composition (basic and acidic residues). Residues 545-564 (SDGTASTNRTSSYQRSTSHT) show a composition bias toward polar residues. The span at 571-592 (SSSRDLPAKSSSASSLEPNNSK) shows a compositional bias: low complexity. Residues 593-607 (AWQPSSYYQSYSIHR) are compositionally biased toward polar residues. Over residues 620 to 639 (SSTSSSTTTTTTTSSVTSPT) the composition is skewed to low complexity. Residues 649–664 (WAEESAEKEKEKEKES) are compositionally biased toward basic and acidic residues. Over residues 665-686 (ATVIPTINTAGTTTTTSTTGTV) the composition is skewed to low complexity. The segment covering 702-711 (VRDEESESQR) has biased composition (basic and acidic residues). The segment covering 712–722 (KARSRQARQSR) has biased composition (basic residues). Over residues 747-789 (RPREDEKEEKEKQDKEKQEEKKETETKEDDYRSRYRSFEEKYR) the composition is skewed to basic and acidic residues. The span at 790 to 819 (TSLASSTTASSTIPSSSSSSSSSLYSTSSL) shows a compositional bias: low complexity. The span at 820–829 (NRPNSLTGLT) shows a compositional bias: polar residues. The span at 835–863 (STRDTDRESDRKEKDEDRDGDDKSQPRSI) shows a compositional bias: basic and acidic residues. The span at 864 to 875 (RDRRRPREKRRS) shows a compositional bias: basic residues. Composition is skewed to basic and acidic residues over residues 890–906 (PDHPSDSEGSTKGEPQS) and 934–947 (GESRRPYSRFEKDD).

PP1 comprises a catalytic subunit, and one or several targeting or regulatory subunits. Ppp1r12a mediates binding to myosin.

The protein resides in the cytoplasm. Regulates myosin phosphatase activity. This chain is Protein phosphatase 1 regulatory subunit 12A (ppp1r12a), found in Danio rerio (Zebrafish).